The sequence spans 146 residues: Ribonuclease H (146 aa).

The RNase H type-1 domain maps to 1–143 (MQKKVTIYTD…CDYLATQAIK (143 aa)). 4 residues coordinate Mg(2+): aspartate 10, glutamate 48, aspartate 70, and aspartate 135.

The protein belongs to the RNase H family. As to quaternary structure, monomer. Requires Mg(2+) as cofactor.

Its subcellular location is the cytoplasm. The enzyme catalyses Endonucleolytic cleavage to 5'-phosphomonoester.. In terms of biological role, endonuclease that specifically degrades the RNA of RNA-DNA hybrids. In Chlorobium phaeobacteroides (strain BS1), this protein is Ribonuclease H.